The sequence spans 583 residues: Aspartate--tRNA(Asp/Asn) ligase (583 aa).

Residue glutamate 172 participates in L-aspartate binding. The tract at residues 196 to 199 is aspartate; that stretch reads QMLK. Arginine 218 contributes to the L-aspartate binding site. ATP-binding positions include 218-220 and glutamine 227; that span reads RDE. Residue histidine 446 coordinates L-aspartate. Glutamate 480 is a binding site for ATP. Arginine 487 provides a ligand contact to L-aspartate. Residue 532–535 participates in ATP binding; it reads GLDR.

It belongs to the class-II aminoacyl-tRNA synthetase family. Type 1 subfamily. Homodimer.

It is found in the cytoplasm. It carries out the reaction tRNA(Asx) + L-aspartate + ATP = L-aspartyl-tRNA(Asx) + AMP + diphosphate. Its function is as follows. Aspartyl-tRNA synthetase with relaxed tRNA specificity since it is able to aspartylate not only its cognate tRNA(Asp) but also tRNA(Asn). Reaction proceeds in two steps: L-aspartate is first activated by ATP to form Asp-AMP and then transferred to the acceptor end of tRNA(Asp/Asn). This Streptococcus mutans serotype c (strain ATCC 700610 / UA159) protein is Aspartate--tRNA(Asp/Asn) ligase.